Consider the following 528-residue polypeptide: MVIGAAARVAIGGCRKLISSHTSLLLVSSQCRQMSMDAQSVSEKLRSSGLLRTQGLIGGKWLDSYDNKTIKVNNPATGEIIADVACMGTKETNDAIASSYEAFTSWSRLTAGERSKVLRRWYDLLIAHKEELGQLITLEQGKPLKEAIGEVAYGASFIEYYAEEAKRVYGDIIPPNLSDRRLLVLKQPVGVVGAITPWNFPLAMITRKVGPALASGCTVVVKPSELTPLTALAAAELALQAGVPPGALNVVMGNAPEIGDALLTSPQVRKITFTGSTAVGKKLMAAAAPTVKKVSLELGGNAPSIVFDDADLDVAVKGTLAAKFRNSGQTCVCANRVLVQDGIYDKFAEAFSEAVQKLEVGDGFRDGTTQGPLINDAAVQKVETFVQDAVSKGAKIIIGGKRHSLGMTFYEPTVIRDVSDNMIMSKEEIFGPVAPLIRFKTEEDAIRIANDTIAGLAAYIFTNSVQRSWRVFEALEYGLVGVNEGLISTEVAPFGGVKQSGLGREGSKYGMDEYLEIKYVCLGDMNRH.

A mitochondrion-targeting transit peptide spans 1-34 (MVIGAAARVAIGGCRKLISSHTSLLLVSSQCRQM). An NAD(+)-binding site is contributed by 196–198 (TPW). Residue arginine 207 participates in substrate binding. NAD(+) contacts are provided by residues 222–225 (KPSE), 275–280 (GSTAVG), and glutamate 297. Glutamate 297 functions as the Proton acceptor in the catalytic mechanism. Arginine 325 is a binding site for substrate. Cysteine 331 (nucleophile) is an active-site residue. A disulfide bond links cysteine 331 and cysteine 333. Residue 428–430 (EIF) participates in NAD(+) binding. Position 488 (serine 488) interacts with substrate.

This sequence belongs to the aldehyde dehydrogenase family. In terms of assembly, homotetramer. Expressed in developing leaf tissues.

The protein resides in the mitochondrion matrix. It catalyses the reaction succinate semialdehyde + NAD(+) + H2O = succinate + NADH + 2 H(+). Its pathway is amino-acid degradation; 4-aminobutanoate degradation. Its activity is regulated as follows. Competitive inhibition by NADH. Inhibited by ATP, ADP and AMP. Redox-regulated. Inhibited under oxydizing conditions. Its function is as follows. Oxidizes specifically succinate semialdehyde. Involved in plant response to environmental stress by preventing the accumulation of reactive oxygen species, probably by regulating proline, gamma-hydroxybutyrate (GHB) and gamma-aminobutyrate (GABA) levels. Required for the maintenance of the shoot apical meristem (SAM) structure and subsequent adaxial-abaxial axis-dependent development of cotyledons and leaves. The protein is Succinate-semialdehyde dehydrogenase, mitochondrial of Arabidopsis thaliana (Mouse-ear cress).